The chain runs to 584 residues: MGGCLSGDVKGGKQAIGGVQQRPTSSTIANNAAHNDAVDFFFRSRGQYPLFSQIELTLSASNLLDCDITSKSDPMAVMYLRKKDGRLEEIGRTEVILNNLNPKWIEKITVSFQFEAVQTLVFHVYDVDTRYHNVPVKTLKLKDQDFLGEGTCVLSEIMTRQNRTLTLTLTGNVRAGVNRNLGTLSIQAEETVASKTVAEINFRCVNLDNKDLFSKSDPFLRISRVVETSAAVPICRTEVVDNNLNPMWRPVCLTMQQFGSKDTPLVIECLDFNTSGNHELIGKTEKSVAELERLCLQKEAANFVYPSLSHGRNKVLKGQLIVDRYVEKVQYSFLDYISSGFELNFMVAVDFTASNGDPRTPSSLHYIDPSGRLNSYQQAIMEVGEVIQFYDSDKRFPAWGFGGRTSDGSVSHAFNLNGASYGDEVVGVEGIMVAYASALRNVSLAGPTLFSNVVDKAAHTASQSLSQNSPKYFVLLIITDGVLTDMAGTVDALVRASDLPLSVLIVGVGNTDFKQMEMLDADNGRRLESSTGRIATRDIVQFVPMKDIHSGLVSVVQALLEELPGQFLTYVRSRKINPIGAPAI.

The tract at residues 1-23 (MGGCLSGDVKGGKQAIGGVQQRP) is disordered. A lipid anchor (N-myristoyl glycine) is attached at G2. C2 domains follow at residues 34 to 167 (HNDA…TLTL) and 178 to 305 (NRNL…NFVY). Residues D67, D73, D126, D128, and D145 each contribute to the Ca(2+) site. Residues 344–563 (NFMVAVDFTA…SVVQALLEEL (220 aa)) form the VWFA domain.

This sequence belongs to the copine family. Interacts with BAP1 and BAP2. Ca(2+) is required as a cofactor. As to expression, expressed at an extremely low level.

Its subcellular location is the cell membrane. In terms of biological role, negative regulator of cell death and defense responses. Repress a number of R genes and may have effects in promoting growth and development. May function in membrane trafficking and in fusion of vesicles with plasma membrane. The sequence is that of Protein BONZAI 3 (BON3) from Arabidopsis thaliana (Mouse-ear cress).